A 339-amino-acid chain; its full sequence is DNA-directed RNA polymerase subunit alpha (339 aa).

Residues methionine 1–glutamate 235 are alpha N-terminal domain (alpha-NTD). The alpha C-terminal domain (alpha-CTD) stretch occupies residues phenylalanine 251–tyrosine 339.

This sequence belongs to the RNA polymerase alpha chain family. As to quaternary structure, homodimer. The RNAP catalytic core consists of 2 alpha, 1 beta, 1 beta' and 1 omega subunit. When a sigma factor is associated with the core the holoenzyme is formed, which can initiate transcription.

It catalyses the reaction RNA(n) + a ribonucleoside 5'-triphosphate = RNA(n+1) + diphosphate. DNA-dependent RNA polymerase catalyzes the transcription of DNA into RNA using the four ribonucleoside triphosphates as substrates. This chain is DNA-directed RNA polymerase subunit alpha, found in Afipia carboxidovorans (strain ATCC 49405 / DSM 1227 / KCTC 32145 / OM5) (Oligotropha carboxidovorans).